A 1580-amino-acid polypeptide reads, in one-letter code: Endoribonuclease Dicer homolog 3 (1580 aa).

Positions 1–12 (MHSSLEPEKMEE) are enriched in basic and acidic residues. A disordered region spans residues 1–22 (MHSSLEPEKMEEGGGSNSLKRK). A Helicase ATP-binding domain is found at 51–223 (VYEVAKNRNI…SPSNYAAQVS (173 aa)). Position 64–71 (64–71 (LGTGIDKS)) interacts with ATP. A DECH box motif is present at residues 170-173 (DECH). The region spanning 394–562 (KLKELFHLLD…SCPPPVKNGH (169 aa)) is the Helicase C-terminal domain. Residues 581–597 (EEAASTQTMSDPPSRNE) are compositionally biased toward polar residues. 2 disordered regions span residues 581-601 (EEAA…QLPP) and 613-638 (QSNG…KKRK). Residues 622 to 633 (SSKSKSSSSAAG) are compositionally biased toward low complexity. The 125-residue stretch at 836–960 (NLIHFANASS…LPPELLARID (125 aa)) folds into the PAZ domain. 2 consecutive RNase III domains span residues 985–1157 (ASQL…VSGG) and 1198–1340 (LIEL…IDTR). Residues E1234, D1326, and E1329 each coordinate Mg(2+).

It belongs to the helicase family. Dicer subfamily. As to quaternary structure, interacts with DRB2 and DRB5. Requires Mg(2+) as cofactor. It depends on Mn(2+) as a cofactor.

It is found in the nucleus. The protein resides in the nucleolus. Its function is as follows. Ribonuclease (RNase) III involved in RNA-mediated post-transcriptional gene silencing (PTGS). Involved in the processing of repeat-associated small interfering RNAs (ra-siRNAs, derived from heterochromatin and DNA repeats such as transposons) by cleaving small dsRNAs into 24 nucleotide ra-siRNAs. Plays a role in antiviral RNA silencing. Involved in the production of viral siRNAs derived from the cabbage leaf curl virus (CaLCuV) and tobacco rattle virus (TRV). Targeted by the viral silencing suppressor (VSR) protein 2b of the cucumber mosaic virus (CMV) that inactivates DCL3 function in RNA silencing. Acts redundantly with DICER-LIKE 1 (DCL1) to promote flowering via repression of FLOWERING LOCUS C (FLC). Does not seem to be involved in microRNAs (miRNAs) processing. In Arabidopsis thaliana (Mouse-ear cress), this protein is Endoribonuclease Dicer homolog 3 (DCL3).